We begin with the raw amino-acid sequence, 266 residues long: MHVNGKVALVTGAAQGIGRAFAEALLLKGAKVALVDWNLEAGVQCKAALDEKFEPQKTLFIQCDVADQQQLRDTFRKVVDHFGRLDILVNNAGVNNEKNWEKTLQINLVSVISGTYLGLDYMSKQNGGEGGIIINMSSLAGLMPVAQQPVYCASKHGIVGFTRSAALAANLMNSGVRLNAICPGFVNTAILESIEKEENMGQYIEYKDHIKDMIKYYGILDPPLIANGLITLIEDDALNGAIMKITTSKGIHFQDYDATPFQAKSQ.

NAD(+)-binding positions include 12-20 (GAAQGIGRA), 36-37 (DW), 63-65 (CDV), and N91. Substrate contacts are provided by S138 and Q148. The active-site Proton acceptor is Y151. NAD(+)-binding positions include 151–155 (YCASK) and 186–188 (VNT).

Belongs to the short-chain dehydrogenases/reductases (SDR) family. As to quaternary structure, homodimer.

It is found in the cytoplasm. It carries out the reaction prostaglandin E2 + NAD(+) = 15-oxoprostaglandin E2 + NADH + H(+). It catalyses the reaction (15S)-hydroxy-(5Z,8Z,11Z,13E)-eicosatetraenoate + NAD(+) = 15-oxo-(5Z,8Z,11Z,13E)-eicosatetraenoate + NADH + H(+). The catalysed reaction is (11R)-hydroxy-(5Z,8Z,12E,14Z)-eicosatetraenoate + NAD(+) = 11-oxo-(5Z,8Z,12E,14Z)-eicosatetraenoate + NADH + H(+). The enzyme catalyses lipoxin A4 + NAD(+) = 15-oxo-(5S,6R)-dihydroxy-(7E,9E,11Z,13E)-eicosatetraenoate + NADH + H(+). It carries out the reaction 15-oxo-(5S,6R)-dihydroxy-(7E,9E,11Z)-eicosatrienoate + NADH + H(+) = (5S,6R,15S)-trihydroxy-(7E,9E,11Z)-eicosatrienoate + NAD(+). It catalyses the reaction prostaglandin A1 + NAD(+) = 15-oxo-prostaglandin A1 + NADH + H(+). The catalysed reaction is prostaglandin E1 + NAD(+) = 15-oxoprostaglandin E1 + NADH + H(+). The enzyme catalyses 14-hydroxy-(4Z,7Z,10Z,12E,16Z,19Z)-docosahexaenoate + NAD(+) = 14-oxo-(4Z,7Z,10Z,12E,16Z,19Z)-docosahexaenoate + NADH + H(+). It carries out the reaction resolvin E1 + NAD(+) = 18-oxo-resolvin E1 + NADH + H(+). It catalyses the reaction resolvin D1 + NAD(+) = 8-oxoresolvin D1 + NADH + H(+). The catalysed reaction is resolvin D1 + NAD(+) = 17-oxoresolvin D1 + NADH + H(+). The enzyme catalyses resolvin D2 + NAD(+) = 7-oxoresolvin D2 + NADH + H(+). It carries out the reaction resolvin D2 + NAD(+) = 16-oxoresolvin D2 + NADH + H(+). In terms of biological role, catalyzes the NAD-dependent dehydrogenation (oxidation) of a broad array of hydroxylated polyunsaturated fatty acids (mainly eicosanoids and docosanoids, including prostaglandins, lipoxins and resolvins), yielding their corresponding keto (oxo) metabolites. Decreases the levels of the pro-proliferative prostaglandins such as prostaglandin E2 (whose activity is increased in cancer because of an increase in the expression of cyclooxygenase 2) and generates oxo-fatty acid products that can profoundly influence cell function by abrogating pro-inflammatory cytokine expression. Converts resolvins E1, D1 and D2 to their oxo products, which represents a mode of resolvin inactivation. Resolvin E1 plays important roles during the resolution phase of acute inflammation, while resolvins D1 and D2 have a unique role in obesity-induced adipose inflammation. The chain is 15-hydroxyprostaglandin dehydrogenase [NAD(+)] (HPGD) from Macaca fascicularis (Crab-eating macaque).